Reading from the N-terminus, the 368-residue chain is Peptide chain release factor 2 (368 aa).

Residue Gln-249 is modified to N5-methylglutamine.

Belongs to the prokaryotic/mitochondrial release factor family. Methylated by PrmC. Methylation increases the termination efficiency of RF2.

The protein localises to the cytoplasm. Its function is as follows. Peptide chain release factor 2 directs the termination of translation in response to the peptide chain termination codons UGA and UAA. This Rhodococcus jostii (strain RHA1) protein is Peptide chain release factor 2.